The primary structure comprises 193 residues: Putative F-box protein At1g31072 (193 aa).

The F-box domain occupies Glu-4–Met-53.

The sequence is that of Putative F-box protein At1g31072 from Arabidopsis thaliana (Mouse-ear cress).